Here is a 370-residue protein sequence, read N- to C-terminus: Zinc finger protein 830 (370 aa).

2 disordered regions span residues 1-21 and 75-220; these read MASSTSARTPAGKRVVNQEEL and HRER…LVPH. Ala2 bears the N-acetylalanine mark. The stretch at 16 to 40 forms a coiled coil; sequence VNQEELRRLMKEKQRLSTNRKRIES. The C2H2-type zinc-finger motif lies at 53-75; it reads CALCNTPVKSELLWQTHVLGKQH. The span at 90–99 shows a compositional bias: polar residues; sequence QGPSAGTAPQ. The span at 104–115 shows a compositional bias: basic and acidic residues; that stretch reads KTTDVESQDAKK. Over residues 121-134 the composition is skewed to polar residues; it reads DQVQPSTSASSANF. A compositionally biased stretch (acidic residues) spans 156 to 171; the sequence is DYEEEEEEEEEEELGG. Over residues 172–191 the composition is skewed to basic and acidic residues; that stretch reads GEERRDSSKHLPDAQGREHS. Residues 196-212 show a composition bias toward polar residues; it reads RETTSNVLPNDPFNTNP. Residue Ser223 is modified to Phosphoserine. The stretch at 310 to 338 forms a coiled coil; that stretch reads IECYRRVEKLRNRQDEIKNKLKEVLTIKE. A phosphoserine mark is found at Ser349 and Ser360.

In terms of assembly, component of the XAB2 complex, a multimeric protein complex composed of XAB2, PRPF19, AQR, ZNF830, ISY1, and PPIE; this complex binds preferentially to RNA. Interacts with XAB2. Identified in a pentameric intron-binding (IB) complex composed of AQR, XAB2, ISY1, ZNF830 and PPIE that is incorporated into the spliceosome as a preassembled complex. The IB complex does not contain PRPF19. In terms of processing, phosphorylated in response to DNA damage by the cell cycle checkpoint kinases ATR/ATM.

The protein resides in the nucleus. The protein localises to the chromosome. Its subcellular location is the nucleus speckle. Its function is as follows. May play a role in pre-mRNA splicing as component of the spliceosome. Acts as an important regulator of the cell cycle that participates in the maintenance of genome integrity. During cell cycle progression in embryonic fibroblast, prevents replication fork collapse, double-strand break formation and cell cycle checkpoint activation. Controls mitotic cell cycle progression and cell survival in rapidly proliferating intestinal epithelium and embryonic stem cells. During the embryo preimplantation, controls different aspects of M phase. During early oocyte growth, plays a role in oocyte survival by preventing chromosomal breaks formation, activation of TP63 and reduction of transcription. The chain is Zinc finger protein 830 from Rattus norvegicus (Rat).